The sequence spans 339 residues: Type IV secretion system protein PtlH homolog (339 aa).

It belongs to the GSP E family.

The protein is Type IV secretion system protein PtlH homolog (ptlH) of Bordetella bronchiseptica (strain ATCC BAA-588 / NCTC 13252 / RB50) (Alcaligenes bronchisepticus).